The following is a 256-amino-acid chain: MVFXLPNKNVIFVAGLGGIGLDTSREIVKAGPKNLVILDRVENPAAIAELQAINPKVTVTFYPYDVTVPLSESVKLLKTIFDKLKTIDLLINGAGILDDHQIERTIAVNFTGLVNTTTAILQFWDKRKGGPGGVIANICSVTGFNAIYQVPVYSASKAAVVSFTQSIAKLAPITGVTAYSINPGITKTTLVHKFNSWLDVEPRVAELLDEHPTQSTTACAQNFVKAIELNQNGAIWKLDVGRLDPVQWTKHWDSGI.

Residue 12 to 35 coordinates NAD(+); the sequence is FVAGLGGIGLDTSREIVKAGPKNL. Ser140 contributes to the substrate binding site. The active-site Proton acceptor is the Tyr153.

It belongs to the short-chain dehydrogenases/reductases (SDR) family. As to quaternary structure, homodimer.

The enzyme catalyses a primary alcohol + NAD(+) = an aldehyde + NADH + H(+). The catalysed reaction is a secondary alcohol + NAD(+) = a ketone + NADH + H(+). The polypeptide is Alcohol dehydrogenase (Adh) (Zaprionus tuberculatus (Vinegar fly)).